Here is a 159-residue protein sequence, read N- to C-terminus: U-actitoxin-Avd13a/b (159 aa).

The first 18 residues, 1–18, serve as a signal peptide directing secretion; that stretch reads MKSIFLVFFAVCLVKAEA. A propeptide spanning residues 19 to 26 is cleaved from the precursor; the sequence is GKGRKREP. Intrachain disulfides connect Cys-33–Cys-45 and Cys-36–Cys-52. A propeptide spanning residues 59–60 is cleaved from the precursor; that stretch reads EP. Cystine bridges form between Cys-67–Cys-79 and Cys-70–Cys-86. Residues 93-94 constitute a propeptide that is removed on maturation; that stretch reads EP. Intrachain disulfides connect Cys-101–Cys-113 and Cys-104–Cys-120. Residues 127–128 constitute a propeptide that is removed on maturation; sequence EP. Intrachain disulfides connect Cys-135–Cys-147 and Cys-138–Cys-154.

Belongs to the sea anemone BBH family.

It is found in the secreted. The protein resides in the nematocyst. Inhibits ion channels. The sequence is that of U-actitoxin-Avd13a/b from Anemonia viridis (Snakelocks anemone).